Here is a 431-residue protein sequence, read N- to C-terminus: Adenylosuccinate synthetase (431 aa).

GTP contacts are provided by residues 13 to 19 and 41 to 43; these read GDEGKGK and GHT. The Proton acceptor role is filled by aspartate 14. The Mg(2+) site is built by aspartate 14 and glycine 41. Residues 14-17, 39-42, threonine 130, arginine 144, glutamine 225, threonine 240, and arginine 304 each bind IMP; these read DEGK and NAGH. Histidine 42 (proton donor) is an active-site residue. 300 to 306 is a substrate binding site; it reads AVTGRPR. GTP-binding positions include arginine 306, 332–334, and 415–417; these read KLD and STG.

It belongs to the adenylosuccinate synthetase family. In terms of assembly, homodimer. Mg(2+) serves as cofactor.

It is found in the cytoplasm. It catalyses the reaction IMP + L-aspartate + GTP = N(6)-(1,2-dicarboxyethyl)-AMP + GDP + phosphate + 2 H(+). It functions in the pathway purine metabolism; AMP biosynthesis via de novo pathway; AMP from IMP: step 1/2. Its function is as follows. Plays an important role in the de novo pathway of purine nucleotide biosynthesis. Catalyzes the first committed step in the biosynthesis of AMP from IMP. The chain is Adenylosuccinate synthetase from Legionella pneumophila (strain Lens).